The sequence spans 843 residues: uncharacterized protein (843 aa).

A DNA-binding region (zn(2)-C6 fungal-type) is located at residues 15 to 42; the sequence is CLRCKQRKIKCDKLWPTCSKCKASSSIC.

It is found in the nucleus. In terms of biological role, required for growth on non-fermentable carbon sources. This is an uncharacterized protein from Saccharomyces cerevisiae (strain ATCC 204508 / S288c) (Baker's yeast).